The primary structure comprises 249 residues: Phycobilisome 27.9 kDa linker polypeptide, phycoerythrin-associated, rod (249 aa).

The region spanning 2-166 (ASQTILELWP…LDRGPAQIDS (165 aa)) is the PBS-linker domain. A CpcD-like domain is found at 198–248 (EKRFKILVQGSKFDSPRRISTTEYIVPASKMTPQIQRINRTSGKIVSITEI).

This sequence belongs to the phycobilisome linker protein family. In terms of assembly, the phycobilisome is a hemidiscoidal structure that is composed of two distinct substructures: a core complex and six rods radiating from the core.

It is found in the cellular thylakoid membrane. In terms of biological role, rod linker protein, associated with phycoerythrin. Linker polypeptides determine the state of aggregation and the location of the disk-shaped phycobiliprotein units within the phycobilisome and modulate their spectroscopic properties in order to mediate a directed and optimal energy transfer. In Microchaete diplosiphon (Fremyella diplosiphon), this protein is Phycobilisome 27.9 kDa linker polypeptide, phycoerythrin-associated, rod (cpeD).